The primary structure comprises 371 residues: Dual-specificity RNA methyltransferase RlmN (371 aa).

Residue glutamate 92 is the Proton acceptor of the active site. The region spanning 98-337 (EADRATLCVS…VTVRKTRGDD (240 aa)) is the Radical SAM core domain. Cysteine 105 and cysteine 342 are oxidised to a cystine. Positions 112, 116, and 119 each coordinate [4Fe-4S] cluster. Residues 166-167 (GE), serine 198, 220-222 (SLH), and asparagine 299 each bind S-adenosyl-L-methionine. The active-site S-methylcysteine intermediate is cysteine 342.

Belongs to the radical SAM superfamily. RlmN family. The cofactor is [4Fe-4S] cluster.

It is found in the cytoplasm. It carries out the reaction adenosine(2503) in 23S rRNA + 2 reduced [2Fe-2S]-[ferredoxin] + 2 S-adenosyl-L-methionine = 2-methyladenosine(2503) in 23S rRNA + 5'-deoxyadenosine + L-methionine + 2 oxidized [2Fe-2S]-[ferredoxin] + S-adenosyl-L-homocysteine. It catalyses the reaction adenosine(37) in tRNA + 2 reduced [2Fe-2S]-[ferredoxin] + 2 S-adenosyl-L-methionine = 2-methyladenosine(37) in tRNA + 5'-deoxyadenosine + L-methionine + 2 oxidized [2Fe-2S]-[ferredoxin] + S-adenosyl-L-homocysteine. Specifically methylates position 2 of adenine 2503 in 23S rRNA and position 2 of adenine 37 in tRNAs. m2A2503 modification seems to play a crucial role in the proofreading step occurring at the peptidyl transferase center and thus would serve to optimize ribosomal fidelity. This chain is Dual-specificity RNA methyltransferase RlmN, found in Actinobacillus succinogenes (strain ATCC 55618 / DSM 22257 / CCUG 43843 / 130Z).